Here is a 105-residue protein sequence, read N- to C-terminus: Heat shock protein HspQ (105 aa).

The segment at 84 to 105 (QPKLDELSASIKKQLKTPRLRN) is disordered. Residues 96–105 (KQLKTPRLRN) show a composition bias toward basic residues.

Belongs to the HspQ family.

Its subcellular location is the cytoplasm. Functionally, involved in the degradation of certain denaturated proteins, including DnaA, during heat shock stress. This is Heat shock protein HspQ from Wigglesworthia glossinidia brevipalpis.